Consider the following 432-residue polypeptide: Proline--tRNA ligase (432 aa).

Belongs to the class-II aminoacyl-tRNA synthetase family. ProS type 2 subfamily. In terms of assembly, homodimer.

The protein localises to the cytoplasm. It carries out the reaction tRNA(Pro) + L-proline + ATP = L-prolyl-tRNA(Pro) + AMP + diphosphate. Catalyzes the attachment of proline to tRNA(Pro) in a two-step reaction: proline is first activated by ATP to form Pro-AMP and then transferred to the acceptor end of tRNA(Pro). The sequence is that of Proline--tRNA ligase from Rickettsia bellii (strain OSU 85-389).